A 190-amino-acid polypeptide reads, in one-letter code: Holliday junction branch migration complex subunit RuvA (190 aa).

Residues 1–64 (MIGKLTGTLL…EDAQLLYGFG (64 aa)) form a domain I region. The interval 65–143 (THSERQAFRE…ADTGAQSLFV (79 aa)) is domain II. Residues 144 to 148 (NNDQN) are flexible linker. A domain III region spans residues 148–190 (NDIVQALMALGYSDKDAAAALKKLPPDVGVTEGIKLALKALAK).

Belongs to the RuvA family. In terms of assembly, homotetramer. Forms an RuvA(8)-RuvB(12)-Holliday junction (HJ) complex. HJ DNA is sandwiched between 2 RuvA tetramers; dsDNA enters through RuvA and exits via RuvB. An RuvB hexamer assembles on each DNA strand where it exits the tetramer. Each RuvB hexamer is contacted by two RuvA subunits (via domain III) on 2 adjacent RuvB subunits; this complex drives branch migration. In the full resolvosome a probable DNA-RuvA(4)-RuvB(12)-RuvC(2) complex forms which resolves the HJ.

The protein localises to the cytoplasm. Functionally, the RuvA-RuvB-RuvC complex processes Holliday junction (HJ) DNA during genetic recombination and DNA repair, while the RuvA-RuvB complex plays an important role in the rescue of blocked DNA replication forks via replication fork reversal (RFR). RuvA specifically binds to HJ cruciform DNA, conferring on it an open structure. The RuvB hexamer acts as an ATP-dependent pump, pulling dsDNA into and through the RuvAB complex. HJ branch migration allows RuvC to scan DNA until it finds its consensus sequence, where it cleaves and resolves the cruciform DNA. In Delftia acidovorans (strain DSM 14801 / SPH-1), this protein is Holliday junction branch migration complex subunit RuvA.